We begin with the raw amino-acid sequence, 180 residues long: Shikimate kinase (180 aa).

14–19 (GAGKSC) provides a ligand contact to ATP. Ser18 is a Mg(2+) binding site. Asp36, Arg60, and Gly82 together coordinate substrate. Arg120 contacts ATP. Arg139 serves as a coordination point for substrate.

Belongs to the shikimate kinase family. Monomer. Mg(2+) is required as a cofactor.

The protein localises to the cytoplasm. It carries out the reaction shikimate + ATP = 3-phosphoshikimate + ADP + H(+). Its pathway is metabolic intermediate biosynthesis; chorismate biosynthesis; chorismate from D-erythrose 4-phosphate and phosphoenolpyruvate: step 5/7. Functionally, catalyzes the specific phosphorylation of the 3-hydroxyl group of shikimic acid using ATP as a cosubstrate. This Xanthomonas campestris pv. campestris (strain 8004) protein is Shikimate kinase.